The following is a 551-amino-acid chain: MSAKEIKFGQDARSLILSGVNQLADAVKVTLGPKGRNVVIDRSFGAPLITKDGVSVAKEIELEEKFENMGAQLVKEVASKTSDVAGDGTTTATVLAQGIYREGVKLVTAGHNPMEIKRGIDKAVEAAVAYLQELSKPIKDHKEIAQVGTISANSDKTIGDIIAEAMEKVGKEGVITVEEAKAMETSLETVEGMQFDRGYLSPYFVTDAERMEAVMEDAMILIHDKKISNMRDMINILEAVAKQGRPLLIIAEDIEGEALATLVVNRLRGTLNVAAVKAPGFGDRRKAMLEDIAILTGGKVISEEVGFKLENATIDMLGNAKRIVIDKENSTIIDGAGSEVDIQGRVKQIRAQIEETKSDYDREKLQERLAKLVGGVAVVKVGAATETEMKEKKARVEDALHATRAAVEEGIVPGGGVALIRCIKAIESLDLPGEQNWGVNIVKRAMEEPLRQISANAGAEGSIVVNQVRGGADTYGFNAAADEYCDMIEAGIIDPTKVVRSALQNASSVAGLMLTTEACIAELPKEEAGGGMPGGMPGGMPGGMGGMGGMM.

ATP contacts are provided by residues T30–P33, K51, D87–T91, G415, N478–A480, and D494.

It belongs to the chaperonin (HSP60) family. As to quaternary structure, forms a cylinder of 14 subunits composed of two heptameric rings stacked back-to-back. Interacts with the co-chaperonin GroES.

It is found in the cytoplasm. It catalyses the reaction ATP + H2O + a folded polypeptide = ADP + phosphate + an unfolded polypeptide.. Its function is as follows. Together with its co-chaperonin GroES, plays an essential role in assisting protein folding. The GroEL-GroES system forms a nano-cage that allows encapsulation of the non-native substrate proteins and provides a physical environment optimized to promote and accelerate protein folding. The sequence is that of Chaperonin GroEL from Syntrophotalea carbinolica (strain DSM 2380 / NBRC 103641 / GraBd1) (Pelobacter carbinolicus).